Reading from the N-terminus, the 143-residue chain is Hemoglobin subunit alpha-2 (143 aa).

S2 is subject to N-acetylserine. Residues 2 to 143 enclose the Globin domain; that stretch reads SLSTKDKDTV…LARALSEKYR (142 aa). The heme b site is built by H60 and H89.

It belongs to the globin family. As to quaternary structure, hb 2 is a heterotetramer of two alpha-2 and two beta chains. As to expression, red blood cells.

Its function is as follows. Involved in oxygen transport from gills to the various peripheral tissues. This is Hemoglobin subunit alpha-2 from Cottoperca gobio (Frogmouth).